The primary structure comprises 282 residues: NADPH-dependent 7-cyano-7-deazaguanine reductase (282 aa).

Residue 88–90 coordinates substrate; the sequence is IES. 90–91 serves as a coordination point for NADPH; it reads SK. The active-site Thioimide intermediate is Cys190. The Proton donor role is filled by Asp197. Position 229–230 (229–230) interacts with substrate; it reads HE. 258-259 provides a ligand contact to NADPH; the sequence is RG.

The protein belongs to the GTP cyclohydrolase I family. QueF type 2 subfamily. Homodimer.

Its subcellular location is the cytoplasm. It carries out the reaction 7-aminomethyl-7-carbaguanine + 2 NADP(+) = 7-cyano-7-deazaguanine + 2 NADPH + 3 H(+). It participates in tRNA modification; tRNA-queuosine biosynthesis. Its function is as follows. Catalyzes the NADPH-dependent reduction of 7-cyano-7-deazaguanine (preQ0) to 7-aminomethyl-7-deazaguanine (preQ1). The chain is NADPH-dependent 7-cyano-7-deazaguanine reductase from Citrobacter koseri (strain ATCC BAA-895 / CDC 4225-83 / SGSC4696).